A 185-amino-acid chain; its full sequence is Ribosome-recycling factor (185 aa).

This sequence belongs to the RRF family.

The protein resides in the cytoplasm. Functionally, responsible for the release of ribosomes from messenger RNA at the termination of protein biosynthesis. May increase the efficiency of translation by recycling ribosomes from one round of translation to another. In Lactococcus lactis subsp. cremoris (strain SK11), this protein is Ribosome-recycling factor.